The following is a 902-amino-acid chain: Aconitate hydratase A (902 aa).

[4Fe-4S] cluster is bound by residues C441, C507, and C510.

Belongs to the aconitase/IPM isomerase family. Monomer. The cofactor is [4Fe-4S] cluster.

The enzyme catalyses citrate = D-threo-isocitrate. The catalysed reaction is (2S,3R)-3-hydroxybutane-1,2,3-tricarboxylate = 2-methyl-cis-aconitate + H2O. It participates in carbohydrate metabolism; tricarboxylic acid cycle; isocitrate from oxaloacetate: step 2/2. It functions in the pathway organic acid metabolism; propanoate degradation. In terms of biological role, involved in the catabolism of short chain fatty acids (SCFA) via the tricarboxylic acid (TCA)(acetyl degradation route) and probably the 2-methylcitrate cycle I (propionate degradation route). Catalyzes the reversible isomerization of citrate to isocitrate via cis-aconitate. Also able to catalyze the hydration of cis-homoaconitate to yield (R)-homocitrate, but with a lower efficiency. Could catalyze the hydration of 2-methyl-cis-aconitate to yield (2R,3S)-2-methylisocitrate. The apo form of AcnA functions as a RNA-binding regulatory protein. The polypeptide is Aconitate hydratase A (acoA) (Thermus thermophilus (strain ATCC 27634 / DSM 579 / HB8)).